Consider the following 716-residue polypeptide: Fatty acid oxidation complex subunit alpha (716 aa).

An enoyl-CoA hydratase/isomerase region spans residues 1–188 (MIYQSPTIQV…KVGAIDAVVA (188 aa)). Residue aspartate 295 participates in substrate binding. The segment at 310 to 716 (KDIKHAAVLG…SNNGSYYPKA (407 aa)) is 3-hydroxyacyl-CoA dehydrogenase. Residues methionine 323, aspartate 342, 399–401 (VVE), lysine 406, and serine 428 each bind NAD(+). Catalysis depends on histidine 449, which acts as the For 3-hydroxyacyl-CoA dehydrogenase activity. Residue asparagine 452 participates in NAD(+) binding. Asparagine 499 and tyrosine 659 together coordinate substrate.

The protein in the N-terminal section; belongs to the enoyl-CoA hydratase/isomerase family. This sequence in the C-terminal section; belongs to the 3-hydroxyacyl-CoA dehydrogenase family. Heterotetramer of two alpha chains (FadB) and two beta chains (FadA).

It catalyses the reaction a (3S)-3-hydroxyacyl-CoA + NAD(+) = a 3-oxoacyl-CoA + NADH + H(+). The catalysed reaction is a (3S)-3-hydroxyacyl-CoA = a (2E)-enoyl-CoA + H2O. It carries out the reaction a 4-saturated-(3S)-3-hydroxyacyl-CoA = a (3E)-enoyl-CoA + H2O. The enzyme catalyses (3S)-3-hydroxybutanoyl-CoA = (3R)-3-hydroxybutanoyl-CoA. It catalyses the reaction a (3Z)-enoyl-CoA = a 4-saturated (2E)-enoyl-CoA. The catalysed reaction is a (3E)-enoyl-CoA = a 4-saturated (2E)-enoyl-CoA. It participates in lipid metabolism; fatty acid beta-oxidation. Its function is as follows. Involved in the aerobic and anaerobic degradation of long-chain fatty acids via beta-oxidation cycle. Catalyzes the formation of 3-oxoacyl-CoA from enoyl-CoA via L-3-hydroxyacyl-CoA. It can also use D-3-hydroxyacyl-CoA and cis-3-enoyl-CoA as substrate. In Shewanella amazonensis (strain ATCC BAA-1098 / SB2B), this protein is Fatty acid oxidation complex subunit alpha.